The chain runs to 383 residues: Mannitol-1-phosphate 5-dehydrogenase (383 aa).

Residue Ala3–Gly14 participates in NAD(+) binding.

It belongs to the mannitol dehydrogenase family.

It catalyses the reaction D-mannitol 1-phosphate + NAD(+) = beta-D-fructose 6-phosphate + NADH + H(+). This chain is Mannitol-1-phosphate 5-dehydrogenase, found in Lacticaseibacillus casei (strain BL23) (Lactobacillus casei).